The following is an 842-amino-acid chain: Xyloglucanase Xgh74A (842 aa).

The N-terminal stretch at 1–32 (MVKKFTSKIKAAVFAAVVAATAIFGPAISSQA) is a signal peptide. The active-site Nucleophile is the D70. BNR repeat units follow at residues 134–144 (RSTDRGETWEK), 185–196 (WRSTDYGVTWSK), 252–262 (YRSTDGGVTWK), and 358–368 (FRSTDGGATWK). Catalysis depends on D480, which acts as the Proton donor. BNR repeat units lie at residues 533–541 (FSYDGGRNW), 577–586 (VTTDNGNSWK), 616–626 (YISTDGGLTFT), 660–671 (WRSTDGGYTFEK), and 708–718 (FRSDDAGKTWV). Residues 771–841 (DKGLVGDLNG…LLQAIPELPK (71 aa)) form the Dockerin domain.

This sequence belongs to the glycosyl hydrolase 74 family.

In terms of biological role, hydrolyzes the glucosidic bonds of unbranched Glc residues in tamarind seed xyloglucan, producing XXXG, XLXG, XXLG and XLLG. Has low activity on carboxymethylcellulose, lichenan,hydroxyethylcellulose and glucuronoxylan, and no activity on xylan, polygalaturonic acid, wheat arabinoxylan, rhamnogalacturan, curdlan, laminarin, galactomannan, galactan, arabinan and pachyman or amorphous cellulose. This chain is Xyloglucanase Xgh74A, found in Acetivibrio thermocellus (Hungateiclostridium thermocellum).